A 220-amino-acid polypeptide reads, in one-letter code: Octanoyltransferase (220 aa).

Residues Pro-27–Val-208 form the BPL/LPL catalytic domain. Residues Arg-66–His-73, Ala-139–Gly-141, and Gly-152–Ala-154 each bind substrate. Cys-170 acts as the Acyl-thioester intermediate in catalysis.

The protein belongs to the LipB family.

The protein resides in the cytoplasm. It carries out the reaction octanoyl-[ACP] + L-lysyl-[protein] = N(6)-octanoyl-L-lysyl-[protein] + holo-[ACP] + H(+). It participates in protein modification; protein lipoylation via endogenous pathway; protein N(6)-(lipoyl)lysine from octanoyl-[acyl-carrier-protein]: step 1/2. Functionally, catalyzes the transfer of endogenously produced octanoic acid from octanoyl-acyl-carrier-protein onto the lipoyl domains of lipoate-dependent enzymes. Lipoyl-ACP can also act as a substrate although octanoyl-ACP is likely to be the physiological substrate. The protein is Octanoyltransferase of Bordetella parapertussis (strain 12822 / ATCC BAA-587 / NCTC 13253).